A 2543-amino-acid chain; its full sequence is Polyketide synthase PksR (2543 aa).

The segment at 165–269 (LEIGAGTGGT…KAVLKKNGLL (105 aa)) is methyltransferase. The region spanning 376-452 (SLIEQTAQFV…ELVEYLVKGH (77 aa)) is the Carrier 1 domain. Ser413 is subject to O-(pantetheine 4'-phosphoryl)serine. Residues 465–485 (TKPAKNEAPLQTERTDPNKPF) form a disordered region. The region spanning 527–959 (TEDIAIIGVS…GAYANLIIEE (433 aa)) is the Ketosynthase family 3 (KS3) 1 domain. The For beta-ketoacyl synthase 1 activity role is filled by Cys700. The tract at residues 1114 to 1242 (HFDVSSINEK…GQCGIGSFEP (129 aa)) is N-terminal hotdog fold. One can recognise a PKS/mFAS DH domain in the interval 1114-1397 (HFDVSSINEK…LKQLRISNQR (284 aa)). A C-terminal hotdog fold region spans residues 1255-1397 (TKLHHIDQMY…LKQLRISNQR (143 aa)). A Carrier 2 domain is found at 1407-1485 (SNLKARIRSY…ELIDFFADKH (79 aa)). An O-(pantetheine 4'-phosphoryl)serine modification is found at Ser1445. Residues 1528–1946 (ADGIAIIGMS…GVNAHVILEE (419 aa)) enclose the Ketosynthase family 3 (KS3) 2 domain. Active-site for beta-ketoacyl synthase 2 activity residues include Cys1680, His1815, and His1862. In terms of domain architecture, Carrier 3 spans 2134 to 2208 (RINNSSDHHI…DMMDLIAKKQ (75 aa)). Position 2168 is an O-(pantetheine 4'-phosphoryl)serine (Ser2168). Residues 2234 to 2514 (RPVFWFHGGV…EFCEKLYSNR (281 aa)) are thioesterase.

The cofactor is pantetheine 4'-phosphate.

Its subcellular location is the cytoplasm. The protein operates within antibiotic biosynthesis; bacillaene biosynthesis. Its function is as follows. Involved in some intermediate steps for the synthesis of the antibiotic polyketide bacillaene which is involved in secondary metabolism. The polypeptide is Polyketide synthase PksR (pksR) (Bacillus subtilis (strain 168)).